Here is a 394-residue protein sequence, read N- to C-terminus: Protein DDI1 homolog 2 (394 aa).

The 81-residue stretch at 1 to 81 (MLITVYCVRR…VILRQRETPE (81 aa)) folds into the Ubiquitin-like domain. The tract at residues 82–128 (ARPAAPFPGLDFSTIAVPGSSSQPAPSQPQAPPPPPPDTSSFPQGLD) is disordered. Over residues 107–119 (PSQPQAPPPPPPD) the composition is skewed to pro residues. The active site involves aspartate 247. The short motif at 371–390 (EEIADRELAEVLQKSAEEAD) is the Ubiquitin-binding element.

Belongs to the DDI1 family. As to quaternary structure, homodimer.

The protein resides in the cytoplasm. It localises to the cytosol. It is found in the chromosome. Functionally, aspartic protease that mediates the cleavage of NFE2L1/NRF1 at 'Leu-104', thereby promoting release of NFE2L1/NRF1 from the endoplasmic reticulum membrane. Ubiquitination of NFE2L1/NRF1 is a prerequisite for cleavage, suggesting that DDI2 specifically recognizes and binds ubiquitinated NFE2L1/NRF1. Seems to act as a proteasomal shuttle which links the proteasome and replication fork proteins like RTF2. Required for cellular survival following replication stress. The chain is Protein DDI1 homolog 2 (ddi2) from Xenopus tropicalis (Western clawed frog).